The chain runs to 265 residues: NAD kinase (265 aa).

D45 acts as the Proton acceptor in catalysis. NAD(+) contacts are provided by residues 45–46 (DG), 122–123 (NE), R148, D150, 161–166 (TAYSKS), and A185.

The protein belongs to the NAD kinase family. The cofactor is a divalent metal cation.

The protein localises to the cytoplasm. It carries out the reaction NAD(+) + ATP = ADP + NADP(+) + H(+). Involved in the regulation of the intracellular balance of NAD and NADP, and is a key enzyme in the biosynthesis of NADP. Catalyzes specifically the phosphorylation on 2'-hydroxyl of the adenosine moiety of NAD to yield NADP. This chain is NAD kinase, found in Lactobacillus delbrueckii subsp. bulgaricus (strain ATCC 11842 / DSM 20081 / BCRC 10696 / JCM 1002 / NBRC 13953 / NCIMB 11778 / NCTC 12712 / WDCM 00102 / Lb 14).